A 150-amino-acid chain; its full sequence is SsrA-binding protein (150 aa).

The protein belongs to the SmpB family.

The protein localises to the cytoplasm. Its function is as follows. Required for rescue of stalled ribosomes mediated by trans-translation. Binds to transfer-messenger RNA (tmRNA), required for stable association of tmRNA with ribosomes. tmRNA and SmpB together mimic tRNA shape, replacing the anticodon stem-loop with SmpB. tmRNA is encoded by the ssrA gene; the 2 termini fold to resemble tRNA(Ala) and it encodes a 'tag peptide', a short internal open reading frame. During trans-translation Ala-aminoacylated tmRNA acts like a tRNA, entering the A-site of stalled ribosomes, displacing the stalled mRNA. The ribosome then switches to translate the ORF on the tmRNA; the nascent peptide is terminated with the 'tag peptide' encoded by the tmRNA and targeted for degradation. The ribosome is freed to recommence translation, which seems to be the essential function of trans-translation. This chain is SsrA-binding protein, found in Bacteroides thetaiotaomicron (strain ATCC 29148 / DSM 2079 / JCM 5827 / CCUG 10774 / NCTC 10582 / VPI-5482 / E50).